The sequence spans 380 residues: D-threo-3-hydroxyaspartate dehydratase (380 aa).

N6-(pyridoxal phosphate)lysine is present on lysine 43.

It belongs to the DSD1 family. Monomer. Requires pyridoxal 5'-phosphate as cofactor. It depends on Mn(2+) as a cofactor. The cofactor is Co(2+). Ni(2+) is required as a cofactor.

It carries out the reaction (3R)-3-hydroxy-D-aspartate = oxaloacetate + NH4(+). Its activity is regulated as follows. Strongly inhibited by hydroxylamine. Modestly inhibited by EDTA. Catalyzes the deamination of D-threo-3-hydroxyaspartate (D-THA). Also exhibits dehydratase activity towards L-threo-3-hydroxyaspartate (L-THA), L-erythro-3-hydroxyaspartate (L-EHA) and D-serine. This is D-threo-3-hydroxyaspartate dehydratase (dthadh) from Delftia sp. (strain HT23).